Consider the following 408-residue polypeptide: Bone morphogenetic protein 4 (408 aa).

Residues 1 to 19 (MIPGNRMLMVVLLCQVLLG) form the signal peptide. Positions 20–292 (GATDASLIPE…HTLTRRRAKR (273 aa)) are excised as a propeptide. Ser91 is modified (phosphoserine). The segment at 91-113 (SGEEEEEEQSQGTGLEYPERPAS) is disordered. N-linked (GlcNAc...) asparagine glycans are attached at residues Asn144 and Asn209. Positions 281-307 (RGHTLTRRRAKRSPKHHPQRSRKKNKN) are disordered. A compositionally biased stretch (basic residues) spans 284–307 (TLTRRRAKRSPKHHPQRSRKKNKN). Intrachain disulfides connect Cys308/Cys373, Cys337/Cys405, and Cys341/Cys407. N-linked (GlcNAc...) asparagine glycosylation is found at Asn350 and Asn365.

Belongs to the TGF-beta family. Homodimer; disulfide-linked. Interacts with GREM2. Part of a complex consisting of TWSG1 and CHRD. Interacts with the serine proteases, HTRA1 and HTRA3; the interaction with either inhibits BMP4-mediated signaling. The HTRA protease activity is required for this inhibition. Interacts with SOSTDC1. Interacts with FBN1 (via N-terminal domain) and FBN2. Interacts with type I receptor BMPR1A. Interacts with type II receptor BMPR2. Interacts with FSTL1; this interaction inhibits the activation of the BMP4/Smad1/5/8 signaling pathway. Interacts with SCUBE3. Interacts with TGFBR3.

Its subcellular location is the secreted. It localises to the extracellular space. The protein resides in the extracellular matrix. In terms of biological role, growth factor of the TGF-beta superfamily that plays essential roles in many developmental processes, including neurogenesis, vascular development, angiogenesis and osteogenesis. Acts in concert with PTHLH/PTHRP to stimulate ductal outgrowth during embryonic mammary development and to inhibit hair follicle induction. Initiates the canonical BMP signaling cascade by associating with type I receptor BMPR1A and type II receptor BMPR2. Once all three components are bound together in a complex at the cell surface, BMPR2 phosphorylates and activates BMPR1A. In turn, BMPR1A propagates signal by phosphorylating SMAD1/5/8 that travel to the nucleus and act as activators and repressors of transcription of target genes. Positively regulates the expression of odontogenic development regulator MSX1 via inducing the IPO7-mediated import of SMAD1 to the nucleus. Required for MSX1-mediated mesenchymal molar tooth bud development beyond the bud stage, via promoting Wnt signaling. Acts as a positive regulator of odontoblast differentiation during mesenchymal tooth germ formation, expression is repressed during the bell stage by MSX1-mediated inhibition of CTNNB1 signaling. Able to induce its own expression in dental mesenchymal cells and also in the neighboring dental epithelial cells via an MSX1-mediated pathway. Can also signal through non-canonical BMP pathways such as ERK/MAP kinase, PI3K/Akt, or SRC cascades. For example, induces SRC phosphorylation which, in turn, activates VEGFR2, leading to an angiogenic response. This Rattus norvegicus (Rat) protein is Bone morphogenetic protein 4.